Here is a 248-residue protein sequence, read N- to C-terminus: Probable transcriptional regulatory protein Mchl_0946 (248 aa).

The protein belongs to the TACO1 family.

It localises to the cytoplasm. The sequence is that of Probable transcriptional regulatory protein Mchl_0946 from Methylorubrum extorquens (strain CM4 / NCIMB 13688) (Methylobacterium extorquens).